The primary structure comprises 213 residues: Holliday junction branch migration complex subunit RuvA (213 aa).

A domain I region spans residues Met-1–Ala-64. The segment at Gln-65–Asn-143 is domain II. The interval Gln-144–Asp-152 is flexible linker. The interval Asp-152–Arg-213 is domain III.

The protein belongs to the RuvA family. Homotetramer. Forms an RuvA(8)-RuvB(12)-Holliday junction (HJ) complex. HJ DNA is sandwiched between 2 RuvA tetramers; dsDNA enters through RuvA and exits via RuvB. An RuvB hexamer assembles on each DNA strand where it exits the tetramer. Each RuvB hexamer is contacted by two RuvA subunits (via domain III) on 2 adjacent RuvB subunits; this complex drives branch migration. In the full resolvosome a probable DNA-RuvA(4)-RuvB(12)-RuvC(2) complex forms which resolves the HJ.

The protein resides in the cytoplasm. Its function is as follows. The RuvA-RuvB-RuvC complex processes Holliday junction (HJ) DNA during genetic recombination and DNA repair, while the RuvA-RuvB complex plays an important role in the rescue of blocked DNA replication forks via replication fork reversal (RFR). RuvA specifically binds to HJ cruciform DNA, conferring on it an open structure. The RuvB hexamer acts as an ATP-dependent pump, pulling dsDNA into and through the RuvAB complex. HJ branch migration allows RuvC to scan DNA until it finds its consensus sequence, where it cleaves and resolves the cruciform DNA. The protein is Holliday junction branch migration complex subunit RuvA of Kocuria rhizophila (strain ATCC 9341 / DSM 348 / NBRC 103217 / DC2201).